We begin with the raw amino-acid sequence, 300 residues long: N-carbamoylputrescine amidase (300 aa).

The CN hydrolase domain maps to 8–266; it reads VTVAALQFAC…EAVLVAQFDL (259 aa). The active-site Proton acceptor is Glu-47. Lys-120 acts as the Proton donor in catalysis. Cys-157 serves as the catalytic Nucleophile.

It belongs to the carbon-nitrogen hydrolase superfamily. As to quaternary structure, homooctamer.

It catalyses the reaction N-carbamoylputrescine + H2O + 2 H(+) = putrescine + NH4(+) + CO2. Its pathway is amine and polyamine biosynthesis; putrescine biosynthesis via agmatine pathway; putrescine from N-carbamoylputrescine (amidase route): step 1/1. Functionally, involved in polyamine biosynthesis. The sequence is that of N-carbamoylputrescine amidase (CPA) from Solanum lycopersicum (Tomato).